We begin with the raw amino-acid sequence, 398 residues long: Fe-regulated protein 8 (398 aa).

Its function is as follows. Protein of unknown function; part of the gene cluster that mediates the biosynthesis of siderophore ferrichrome A which is contributing to organismal virulence. The polypeptide is Fe-regulated protein 8 (Mycosarcoma maydis (Corn smut fungus)).